Reading from the N-terminus, the 768-residue chain is cGMP-dependent protein kinase, isozyme 1 (768 aa).

Residues 1 to 192 (MAAGMLTDRE…NDFLKNIDAS (192 aa)) are regulatory. Residues 114–127 (PLASTSSASPSGRT) show a composition bias toward low complexity. Residues 114–134 (PLASTSSASPSGRTSADEVRP) form a disordered region. 3',5'-cyclic GMP contacts are provided by residues 249–252 (GELA), 259–260 (RT), Arg366, 375–378 (GEQA), 385–386 (RT), and Tyr421. Residues 457-717 (LEVVSTLGIG…IQDIKKHKWF (261 aa)) enclose the Protein kinase domain. Residues 463 to 471 (LGIGGFGRV) and Lys488 each bind ATP. Residue Asp582 is the Proton acceptor of the active site. The region spanning 718 to 768 (LGFDWDGLASQLLIPPFVRPIAHPTDVRYFDRFPCDLNEPPDELSGWDADF) is the AGC-kinase C-terminal domain.

This sequence belongs to the protein kinase superfamily. AGC Ser/Thr protein kinase family. cGMP subfamily. As to quaternary structure, homodimer. The cofactor is Mg(2+). Autophosphorylated. In terms of tissue distribution, in embryo stage 13, expression is seen in a few large, irregular cells having the appearance of hemocytes or macrophages. In adults, expression is seen in optic lamina and weakly in testis.

The catalysed reaction is L-seryl-[protein] + ATP = O-phospho-L-seryl-[protein] + ADP + H(+). The enzyme catalyses L-threonyl-[protein] + ATP = O-phospho-L-threonyl-[protein] + ADP + H(+). Binding of cGMP results in enzyme activation. The protein is cGMP-dependent protein kinase, isozyme 1 (Pkg21D) of Drosophila melanogaster (Fruit fly).